The primary structure comprises 391 residues: Succinyl-diaminopimelate desuccinylase (391 aa).

Histidine 67 serves as a coordination point for Zn(2+). Aspartate 69 is an active-site residue. A Zn(2+)-binding site is contributed by aspartate 101. The active-site Proton acceptor is glutamate 135. Positions 136, 164, and 353 each coordinate Zn(2+).

This sequence belongs to the peptidase M20A family. DapE subfamily. As to quaternary structure, homodimer. It depends on Zn(2+) as a cofactor. Co(2+) serves as cofactor.

The catalysed reaction is N-succinyl-(2S,6S)-2,6-diaminopimelate + H2O = (2S,6S)-2,6-diaminopimelate + succinate. It functions in the pathway amino-acid biosynthesis; L-lysine biosynthesis via DAP pathway; LL-2,6-diaminopimelate from (S)-tetrahydrodipicolinate (succinylase route): step 3/3. Its function is as follows. Catalyzes the hydrolysis of N-succinyl-L,L-diaminopimelic acid (SDAP), forming succinate and LL-2,6-diaminopimelate (DAP), an intermediate involved in the bacterial biosynthesis of lysine and meso-diaminopimelic acid, an essential component of bacterial cell walls. The sequence is that of Succinyl-diaminopimelate desuccinylase from Rickettsia bellii (strain RML369-C).